The chain runs to 152 residues: Superoxide dismutase [Cu-Zn] (152 aa).

Cu cation contacts are provided by H45, H47, and H62. Cysteines 56 and 145 form a disulfide. Zn(2+)-binding residues include H62, H70, H79, and D82. Cu cation is bound at residue H119.

Belongs to the Cu-Zn superoxide dismutase family. Homodimer. Cu cation serves as cofactor. Zn(2+) is required as a cofactor.

The protein resides in the cytoplasm. The catalysed reaction is 2 superoxide + 2 H(+) = H2O2 + O2. In terms of biological role, destroys radicals which are normally produced within the cells and which are toxic to biological systems. This is Superoxide dismutase [Cu-Zn] (SODCC) from Paulownia kawakamii (Dragon tree).